The chain runs to 877 residues: DNA polymerase I (877 aa).

The 94-residue stretch at 177 to 270 (TPAQFIDLKA…LEDLVYSGPD (94 aa)) folds into the 5'-3' exonuclease domain. The 3'-5' exonuclease domain maps to 302–465 (DFTIVDQISQ…TEPILLEKLS (164 aa)).

Belongs to the DNA polymerase type-A family. As to quaternary structure, single-chain monomer with multiple functions.

It carries out the reaction DNA(n) + a 2'-deoxyribonucleoside 5'-triphosphate = DNA(n+1) + diphosphate. In addition to polymerase activity, this DNA polymerase exhibits 3'-5' and 5'-3' exonuclease activity. This chain is DNA polymerase I (polA), found in Streptococcus pneumoniae (strain ATCC BAA-255 / R6).